The sequence spans 218 residues: MVAWRSAFLVCLAFSLATLVQRGSGDFDDFNLKDAVKETSSVKQRWNHVTTTTKRPVTTRAPANTLGNDFDLADALDDRNDRDDGRRKPIAGGGGFSDKDLEDIVGGGEYKPDKGKGDGRYGSNDDPGSGMVAETGTIAGVASALAMALIGAVSSYISYQQKKFCFSIQHAAEGQEGLNADYVKGENLEAVVCEEPQVKYSALHTQSAEPPPSEPARI.

The N-terminal stretch at 1–25 (MVAWRSAFLVCLAFSLATLVQRGSG) is a signal peptide. Residues 26–136 (DFDDFNLKDA…PGSGMVAETG (111 aa)) lie on the Extracellular side of the membrane. Residues 72–128 (LADALDDRNDRDDGRRKPIAGGGGFSDKDLEDIVGGGEYKPDKGKGDGRYGSNDDPG) are disordered. Composition is skewed to basic and acidic residues over residues 76–87 (LDDRNDRDDGRR) and 110–119 (YKPDKGKGDG). A glycan (O-linked (Xyl...) (chondroitin sulfate) serine) is linked at serine 129. Residues 137-157 (TIAGVASALAMALIGAVSSYI) form a helical membrane-spanning segment. Over 158–218 (SYQQKKFCFS…EPPPSEPARI (61 aa)) the chain is Cytoplasmic.

Belongs to the CD99 family. O-glycosylated.

Its subcellular location is the cell membrane. The protein resides in the cell junction. It is found in the secreted. In terms of biological role, plays a role in a late step of leukocyte extravasation helping cells to overcome the endothelial basement membrane. Acts at the same site as, but independently of, PECAM1. Homophilic adhesion molecule, but these interactions may not be required for cell aggregation. This Pongo abelii (Sumatran orangutan) protein is CD99 antigen-like protein 2 (CD99L2).